A 77-amino-acid polypeptide reads, in one-letter code: Liver-expressed antimicrobial peptide 2 (77 aa).

Residues 1-22 (MWHLKLCAVLMIFLLLLGQIDG) form the signal peptide. Positions 23–37 (SPIPEVSSAKRRPRR) are excised as a propeptide. 2 disulfides stabilise this stretch: C54–C65 and C60–C70.

The protein belongs to the LEAP2 family.

It localises to the secreted. In terms of biological role, has an antimicrobial activity. In Homo sapiens (Human), this protein is Liver-expressed antimicrobial peptide 2 (LEAP2).